A 693-amino-acid polypeptide reads, in one-letter code: Protein-glutamine gamma-glutamyltransferase E (693 aa).

At Tyr-111 the chain carries Phosphotyrosine. Thr-112 carries the phosphothreonine modification. Ca(2+)-binding residues include Ala-222, Asn-225, Asn-227, and Asp-228. Cys-273 is a catalytic residue. Ca(2+) contacts are provided by Asp-302, Asp-304, Asn-306, Ser-308, and Asp-325. Catalysis depends on residues His-331 and Asp-354. 4 residues coordinate Ca(2+): Asn-394, Thr-416, Glu-444, and Glu-449. A disordered region spans residues 455–482 (KAMNKLKPNASFGATSSRGPQGEEKEPS).

It belongs to the transglutaminase superfamily. Transglutaminase family. Consists of two polypeptide chains, which are synthesized as a precursor form of a single polypeptide. The cofactor is Ca(2+). In terms of processing, activated by proteolytic processing. In vitro activation is commonly achieved by cleavage with dispase, a neutral bacterial protease. Physiological activation may be catalyzed by CTSL and, to a lesser extent, by CTSS.

The protein resides in the cytoplasm. The catalysed reaction is L-glutaminyl-[protein] + L-lysyl-[protein] = [protein]-L-lysyl-N(6)-5-L-glutamyl-[protein] + NH4(+). Its function is as follows. Catalyzes the calcium-dependent formation of isopeptide cross-links between glutamine and lysine residues in various proteins, as well as the conjugation of polyamines to proteins. Involved in the formation of the cornified envelope (CE), a specialized component consisting of covalent cross-links of proteins beneath the plasma membrane of terminally differentiated keratinocytes. Catalyzes small proline-rich proteins and LOR cross-linking to form small interchain oligomers, which are further cross-linked by TGM1 onto the growing CE scaffold. In hair follicles, involved in cross-linking structural proteins to hardening the inner root sheath. In Rattus norvegicus (Rat), this protein is Protein-glutamine gamma-glutamyltransferase E (Tgm3).